The primary structure comprises 503 residues: WD repeat-containing protein 55 homolog (503 aa).

The interval 1–131 (MHTHNNFKTP…DSAAFDLDDL (131 aa)) is disordered. Composition is skewed to acidic residues over residues 12-23 (DADELDDLDDDM) and 37-56 (VGED…DMEA). The segment covering 59–76 (PNQNADENESISSDSSFD) has biased composition (polar residues). Acidic residues predominate over residues 78-96 (NAEDSSDSDDSMLEEDEAE). WD repeat units lie at residues 157-196 (KLED…NKLL), 201-242 (VHSK…KLYE), 244-282 (AHDD…PIFE), 285-324 (EVED…LYVQ), 327-366 (PYEE…YHCD), and 411-450 (QHNM…DFGD). Residues 483–503 (TKEDEDNADNNDAAAGPSNSA) form a disordered region.

This sequence belongs to the WD repeat WDR55 family.

This Drosophila pseudoobscura pseudoobscura (Fruit fly) protein is WD repeat-containing protein 55 homolog.